Here is a 160-residue protein sequence, read N- to C-terminus: Phosphopantetheine adenylyltransferase (160 aa).

Residue S9 participates in substrate binding. Residues 9–10 (SF) and H17 each bind ATP. K41, L73, and K87 together coordinate substrate. ATP is bound by residues 88 to 90 (GLR), E98, and 123 to 129 (YGYLSSS).

Belongs to the bacterial CoaD family. As to quaternary structure, homohexamer. The cofactor is Mg(2+).

It is found in the cytoplasm. The catalysed reaction is (R)-4'-phosphopantetheine + ATP + H(+) = 3'-dephospho-CoA + diphosphate. It functions in the pathway cofactor biosynthesis; coenzyme A biosynthesis; CoA from (R)-pantothenate: step 4/5. In terms of biological role, reversibly transfers an adenylyl group from ATP to 4'-phosphopantetheine, yielding dephospho-CoA (dPCoA) and pyrophosphate. The sequence is that of Phosphopantetheine adenylyltransferase from Caldanaerobacter subterraneus subsp. tengcongensis (strain DSM 15242 / JCM 11007 / NBRC 100824 / MB4) (Thermoanaerobacter tengcongensis).